Consider the following 329-residue polypeptide: Serpentine receptor class alpha-4 (329 aa).

6 helical membrane passes run 25 to 45 (IIVL…IKVV), 103 to 123 (LYLE…TGLL), 144 to 164 (GLAI…LIIW), 188 to 208 (YFQS…ILIW), 238 to 258 (ICFL…GFFI), and 273 to 293 (LVAV…ILIF).

Belongs to the nematode receptor-like protein sra family.

It localises to the membrane. The protein is Serpentine receptor class alpha-4 (sra-4) of Caenorhabditis elegans.